We begin with the raw amino-acid sequence, 1073 residues long: Transmembrane protein 132E (1073 aa).

The signal sequence occupies residues 1–33; the sequence is MGHFVVQGDLPWILCSLRLVIMIIAGKVSPTSS. Residues 34–899 lie on the Extracellular side of the membrane; the sequence is DALFSVPVPS…MTDLEIGMYA (866 aa). Asn102 is a glycosylation site (N-linked (GlcNAc...) asparagine). The tract at residues 246 to 270 is disordered; that stretch reads DPDSNDECGESYPRRGGPSRGESLS. N-linked (GlcNAc...) asparagine glycans are attached at residues Asn324, Asn396, and Asn746. The chain crosses the membrane as a helical span at residues 900–920; that stretch reads LLGVFCLAILVFLINCIVFVL. Residues 921–1073 lie on the Cytoplasmic side of the membrane; the sequence is KYRHKRIPPE…DYMRRIKEIA (153 aa). The span at 952–970 shows a compositional bias: polar residues; the sequence is TQSDLSPQTVESPSNTLEG. The segment at 952–1024 is disordered; sequence TQSDLSPQTV…PTSKRKRVKF (73 aa). Over residues 982–994 the composition is skewed to low complexity; the sequence is SGSSQTSVQSQVH.

Belongs to the TMEM132 family.

Its subcellular location is the membrane. Required for normal inner ear hair cell function and hearing. The polypeptide is Transmembrane protein 132E (tmem132e) (Danio rerio (Zebrafish)).